Here is a 172-residue protein sequence, read N- to C-terminus: SsrA-binding protein (172 aa).

It belongs to the SmpB family.

Its subcellular location is the cytoplasm. Functionally, required for rescue of stalled ribosomes mediated by trans-translation. Binds to transfer-messenger RNA (tmRNA), required for stable association of tmRNA with ribosomes. tmRNA and SmpB together mimic tRNA shape, replacing the anticodon stem-loop with SmpB. tmRNA is encoded by the ssrA gene; the 2 termini fold to resemble tRNA(Ala) and it encodes a 'tag peptide', a short internal open reading frame. During trans-translation Ala-aminoacylated tmRNA acts like a tRNA, entering the A-site of stalled ribosomes, displacing the stalled mRNA. The ribosome then switches to translate the ORF on the tmRNA; the nascent peptide is terminated with the 'tag peptide' encoded by the tmRNA and targeted for degradation. The ribosome is freed to recommence translation, which seems to be the essential function of trans-translation. In Dehalococcoides mccartyi (strain CBDB1), this protein is SsrA-binding protein.